Reading from the N-terminus, the 682-residue chain is Elongation factor G (682 aa).

A tr-type G domain is found at 8–282 (QKFRNFGIMA…AVVDYLPSPV (275 aa)). GTP contacts are provided by residues 17–24 (AHIDAGKT), 81–85 (DTPGH), and 135–138 (NKMD).

Belongs to the TRAFAC class translation factor GTPase superfamily. Classic translation factor GTPase family. EF-G/EF-2 subfamily.

It localises to the cytoplasm. In terms of biological role, catalyzes the GTP-dependent ribosomal translocation step during translation elongation. During this step, the ribosome changes from the pre-translocational (PRE) to the post-translocational (POST) state as the newly formed A-site-bound peptidyl-tRNA and P-site-bound deacylated tRNA move to the P and E sites, respectively. Catalyzes the coordinated movement of the two tRNA molecules, the mRNA and conformational changes in the ribosome. This chain is Elongation factor G, found in Malacoplasma penetrans (strain HF-2) (Mycoplasma penetrans).